We begin with the raw amino-acid sequence, 333 residues long: Holliday junction branch migration complex subunit RuvB (333 aa).

The interval 1–182 is large ATPase domain (RuvB-L); that stretch reads MEERLVSGDV…FGVISRLEYY (182 aa). ATP is bound by residues L21, R22, G63, K66, T67, T68, 129-131, R172, Y182, and R219; that span reads EDY. T67 is a Mg(2+) binding site. The small ATPAse domain (RuvB-S) stretch occupies residues 183 to 253; it reads TTEHLTQIVM…LAKEALELLQ (71 aa). Positions 256–333 are head domain (RuvB-H); sequence RLGLDHIDHK…EHFGMEVPKQ (78 aa). 2 residues coordinate DNA: R311 and R316.

This sequence belongs to the RuvB family. In terms of assembly, homohexamer. Forms an RuvA(8)-RuvB(12)-Holliday junction (HJ) complex. HJ DNA is sandwiched between 2 RuvA tetramers; dsDNA enters through RuvA and exits via RuvB. An RuvB hexamer assembles on each DNA strand where it exits the tetramer. Each RuvB hexamer is contacted by two RuvA subunits (via domain III) on 2 adjacent RuvB subunits; this complex drives branch migration. In the full resolvosome a probable DNA-RuvA(4)-RuvB(12)-RuvC(2) complex forms which resolves the HJ.

The protein localises to the cytoplasm. It carries out the reaction ATP + H2O = ADP + phosphate + H(+). In terms of biological role, the RuvA-RuvB-RuvC complex processes Holliday junction (HJ) DNA during genetic recombination and DNA repair, while the RuvA-RuvB complex plays an important role in the rescue of blocked DNA replication forks via replication fork reversal (RFR). RuvA specifically binds to HJ cruciform DNA, conferring on it an open structure. The RuvB hexamer acts as an ATP-dependent pump, pulling dsDNA into and through the RuvAB complex. RuvB forms 2 homohexamers on either side of HJ DNA bound by 1 or 2 RuvA tetramers; 4 subunits per hexamer contact DNA at a time. Coordinated motions by a converter formed by DNA-disengaged RuvB subunits stimulates ATP hydrolysis and nucleotide exchange. Immobilization of the converter enables RuvB to convert the ATP-contained energy into a lever motion, pulling 2 nucleotides of DNA out of the RuvA tetramer per ATP hydrolyzed, thus driving DNA branch migration. The RuvB motors rotate together with the DNA substrate, which together with the progressing nucleotide cycle form the mechanistic basis for DNA recombination by continuous HJ branch migration. Branch migration allows RuvC to scan DNA until it finds its consensus sequence, where it cleaves and resolves cruciform DNA. In Geobacillus sp. (strain WCH70), this protein is Holliday junction branch migration complex subunit RuvB.